Consider the following 641-residue polypeptide: Chaperone protein DnaK (641 aa).

Threonine 200 is modified (phosphothreonine; by autocatalysis). Residues 606–623 are compositionally biased toward low complexity; it reads AEQGGNADAASGNAQASK. The tract at residues 606–627 is disordered; it reads AEQGGNADAASGNAQASKAADD.

Belongs to the heat shock protein 70 family.

Its function is as follows. Acts as a chaperone. The polypeptide is Chaperone protein DnaK (Xanthomonas euvesicatoria pv. vesicatoria (strain 85-10) (Xanthomonas campestris pv. vesicatoria)).